Reading from the N-terminus, the 361-residue chain is Ribosomal RNA large subunit methyltransferase M (361 aa).

Residues Ser187, 220 to 223, Asp239, Asp259, and Asp276 contribute to the S-adenosyl-L-methionine site; that span reads CPGG. The active-site Proton acceptor is Lys305.

Belongs to the class I-like SAM-binding methyltransferase superfamily. RNA methyltransferase RlmE family. RlmM subfamily. As to quaternary structure, monomer.

The protein localises to the cytoplasm. It catalyses the reaction cytidine(2498) in 23S rRNA + S-adenosyl-L-methionine = 2'-O-methylcytidine(2498) in 23S rRNA + S-adenosyl-L-homocysteine + H(+). Its function is as follows. Catalyzes the 2'-O-methylation at nucleotide C2498 in 23S rRNA. This chain is Ribosomal RNA large subunit methyltransferase M, found in Shewanella baltica (strain OS185).